Here is a 443-residue protein sequence, read N- to C-terminus: Transcriptional adapter 2-alpha (443 aa).

The residue at position 6 (proline 6) is a Phosphoserine; in variant Ser-6. The ZZ-type zinc finger occupies 12-69; that stretch reads SDKPPCRGCSSYLMEPYIKCAECGPPPFFLCLQCFTRGFEYKKHQSDHTYEIMTSDFP. Positions 17, 20, 31, 34, 42, 45, 55, and 59 each coordinate Zn(2+). In terms of domain architecture, SANT spans 70 to 122; the sequence is VLDPSWTAQEEMALLEAVMDCGFGNWQDVANQMCTKTKEECEKHYMKHFINNP. Glycyl lysine isopeptide (Lys-Gly) (interchain with G-Cter in SUMO2) cross-links involve residues lysine 132 and lysine 138. A disordered region spans residues 348–372; it reads SPSIPMASNSGRRSAPPLNLTGLPG. In terms of domain architecture, SWIRM spans 356–443; the sequence is NSGRRSAPPL…LIREGYITKG (88 aa). Residues 426–435 mediate DNA binding; it reads KTRKIYDFLI.

Interacts with GCN5 and NR3C1. Associated with the P/CAF protein in the PCAF complex. Component of the PCAF complex, at least composed of TADA2L/ADA2, TADA3L/ADA3, TAF5L/PAF65-beta, TAF6L/PAF65-alpha, TAF10/TAFII30, TAF12/TAFII20, TAF9/TAFII31 and TRRAP. Component of the ADA2A-containing complex (ATAC), composed of KAT14, KAT2A, TADA2L, TADA3L, ZZ3, MBIP, WDR5, YEATS2, CCDC101 and DR1. Interacts with CCDC134. In terms of tissue distribution, expressed in all tissues, but most abundantly in testis.

It localises to the nucleus. The protein localises to the chromosome. Component of the ATAC complex, a complex with histone acetyltransferase activity on histones H3 and H4. Required for the function of some acidic activation domains, which activate transcription from a distant site. Binds double-stranded DNA. Binds dinucleosomes, probably at the linker region between neighboring nucleosomes. Plays a role in chromatin remodeling. May promote TP53/p53 'Lys-321' acetylation, leading to reduced TP53 stability and transcriptional activity. May also promote XRCC6 acetylation thus facilitating cell apoptosis in response to DNA damage. The protein is Transcriptional adapter 2-alpha (TADA2A) of Homo sapiens (Human).